Reading from the N-terminus, the 1430-residue chain is ABC transporter eupT (1430 aa).

A disordered region spans residues 1–26 (MAPAIDSTVNDLQPNTPNPEKALSSQ). In terms of domain architecture, ABC transporter 1 spans 112–368 (LALPAMIRQL…FVNLGFECPA (257 aa)). Asn292 carries N-linked (GlcNAc...) asparagine glycosylation. The next 5 helical transmembrane spans lie at 476–496 (WPAV…SSLF), 511–531 (VVLF…VMTL), 557–577 (VLVD…VFYF), 586–606 (GNFF…SGVF), and 620–640 (MVPA…VVPV). A glycan (N-linked (GlcNAc...) asparagine) is linked at Asn684. A helical transmembrane segment spans residues 707–727 (VGIIIAMVIFNYLMYFIASEY). Positions 789-1032 (FHWNNVCYDL…TLIDYFERNG (244 aa)) constitute an ABC transporter 2 domain. 825 to 832 (GVSGAGKT) lines the ATP pocket. An N-linked (GlcNAc...) asparagine glycan is attached at Asn1019. 6 helical membrane passes run 1133–1153 (ITLC…APLS), 1213–1233 (LPWS…PIGF), 1249–1269 (LMWL…HMCI), 1278–1298 (GGNI…VLAS), 1305–1325 (FWIF…VLST), and 1400–1420 (FGIL…LYWI).

It belongs to the ABC transporter superfamily. ABCG family. PDR (TC 3.A.1.205) subfamily.

The protein localises to the cell membrane. ABC transporter; part of the gene cluster that mediates the biosynthesis of eupenifeldin, a bistropolone meroterpenoid that acts as an antitumor agent. In Phoma sp, this protein is ABC transporter eupT.